The sequence spans 466 residues: tRNA-2-methylthio-N(6)-dimethylallyladenosine synthase (466 aa).

Residues 5–125 form the MTTase N-terminal domain; it reads RKLHIKSYGC…LPELLARAGR (121 aa). Positions 14, 50, 88, 166, 170, and 173 each coordinate [4Fe-4S] cluster. Residues 152-384 enclose the Radical SAM core domain; the sequence is RARGVSAFVT…QSLIDSQQAA (233 aa). The 63-residue stretch at 387 to 449 folds into the TRAM domain; sequence KAAIGTVVDV…RYSLLGELVA (63 aa).

Belongs to the methylthiotransferase family. MiaB subfamily. As to quaternary structure, monomer. [4Fe-4S] cluster serves as cofactor.

It localises to the cytoplasm. The enzyme catalyses N(6)-dimethylallyladenosine(37) in tRNA + (sulfur carrier)-SH + AH2 + 2 S-adenosyl-L-methionine = 2-methylsulfanyl-N(6)-dimethylallyladenosine(37) in tRNA + (sulfur carrier)-H + 5'-deoxyadenosine + L-methionine + A + S-adenosyl-L-homocysteine + 2 H(+). Catalyzes the methylthiolation of N6-(dimethylallyl)adenosine (i(6)A), leading to the formation of 2-methylthio-N6-(dimethylallyl)adenosine (ms(2)i(6)A) at position 37 in tRNAs that read codons beginning with uridine. The sequence is that of tRNA-2-methylthio-N(6)-dimethylallyladenosine synthase from Bradyrhizobium sp. (strain BTAi1 / ATCC BAA-1182).